The chain runs to 353 residues: 3-dehydroquinate synthase (353 aa).

NAD(+)-binding positions include 61-66 (DGEEAK), 119-120 (TT), Lys132, and Lys141. Glu174, His238, and His254 together coordinate Zn(2+).

Belongs to the sugar phosphate cyclases superfamily. Dehydroquinate synthase family. The cofactor is Co(2+). Zn(2+) serves as cofactor. Requires NAD(+) as cofactor.

It is found in the cytoplasm. It catalyses the reaction 7-phospho-2-dehydro-3-deoxy-D-arabino-heptonate = 3-dehydroquinate + phosphate. Its pathway is metabolic intermediate biosynthesis; chorismate biosynthesis; chorismate from D-erythrose 4-phosphate and phosphoenolpyruvate: step 2/7. In terms of biological role, catalyzes the conversion of 3-deoxy-D-arabino-heptulosonate 7-phosphate (DAHP) to dehydroquinate (DHQ). The sequence is that of 3-dehydroquinate synthase from Sulfolobus acidocaldarius (strain ATCC 33909 / DSM 639 / JCM 8929 / NBRC 15157 / NCIMB 11770).